A 353-amino-acid polypeptide reads, in one-letter code: Aliphatic aldoxime dehydratase (353 aa).

An an aliphatic aldoxime-binding site is contributed by Ser219. Position 299 (His299) interacts with heme b. His320 is a binding site for an aliphatic aldoxime. His320 is a catalytic residue.

It belongs to the heme-containing dehydratase family. Homodimer. Heme b is required as a cofactor.

The catalysed reaction is an aliphatic aldoxime = a nitrile + H2O. Its activity is regulated as follows. Active when the heme iron is in the ferrous state. Activated by FMN, Fe(2+), Sn(2+), Na(2)SO(3), Na(2)S and vitamin K3. In terms of biological role, catalyzes the dehydration of aldoximes to their corresponding nitrile. Is active toward various arylalkyl- and alkyl-aldoximes, and to a lesser extent toward aryl-aldoximes. The protein is Aliphatic aldoxime dehydratase of Rhodococcus globerulus.